Here is a 306-residue protein sequence, read N- to C-terminus: Glutaminase (306 aa).

7 residues coordinate substrate: serine 61, asparagine 111, glutamate 157, asparagine 164, tyrosine 188, tyrosine 240, and valine 258.

This sequence belongs to the glutaminase family. Homotetramer.

It carries out the reaction L-glutamine + H2O = L-glutamate + NH4(+). The polypeptide is Glutaminase (Psychrobacter cryohalolentis (strain ATCC BAA-1226 / DSM 17306 / VKM B-2378 / K5)).